The following is a 734-amino-acid chain: Amino-acid acetyltransferase, mitochondrial (734 aa).

A disordered region spans residues 384–433; it reads YSETSSRSTRAEADSNFNLRDDIPLSSFTEQKSGELEYSPRHQNDSPTQQ. 2 stretches are compositionally biased toward basic and acidic residues: residues 392–406 and 415–427; these read TRAEADSNFNLRDDI and KSGELEYSPRHQN. One can recognise an N-acetyltransferase domain in the interval 555–724; that stretch reads GVPQISLTDP…YEAVCKTIEP (170 aa).

This sequence belongs to the acetyltransferase family.

It is found in the mitochondrion. The catalysed reaction is L-glutamate + acetyl-CoA = N-acetyl-L-glutamate + CoA + H(+). Its pathway is amino-acid biosynthesis; L-arginine biosynthesis; N(2)-acetyl-L-ornithine from L-glutamate: step 1/4. In terms of biological role, N-acetylglutamate synthase involved in arginine biosynthesis. The sequence is that of Amino-acid acetyltransferase, mitochondrial (arg2) from Botryotinia fuckeliana (strain B05.10) (Noble rot fungus).